The chain runs to 301 residues: Dimethylsulfoniopropionate lyase (301 aa).

Active-site proton donor/acceptor residues include Cys-111 and Cys-230.

It belongs to the aspartate/glutamate racemases family. ALMA1 subfamily. In terms of assembly, homotetramer.

The catalysed reaction is S,S-dimethyl-beta-propiothetin = acrylate + dimethyl sulfide + H(+). Functionally, mediates cleavage of dimethylsulfoniopropionate (DMSP) into dimethyl sulfide (DMS) and acrylate. DMS is the principal form by which sulfur is transported from oceans to the atmosphere and is a key component of the ocean sulfur cycle. The sequence is that of Dimethylsulfoniopropionate lyase from Durusdinium sp. clade D (Symbiodinium sp. clade D).